A 434-amino-acid chain; its full sequence is MSFNTIIDWNSCTAKQQRQLLMRPAISASESITRTVNDILDSVKARGDDALREYSAKFDKTTVTALKVSAEEIAAASERLSDELKQAMAVAVKNIETFHTAQKLPPVDVETQPGVRCQQVTRPVASVGLYIPGGSAPLFSTVLMLATPARIAGCKKVVLCSPPPIADEILYAAQLCGVQDVFNVGGAQAIAALAFGTESVPKVDKIFGPGNAFVTEAKRQVSQRLDGAAIDMPAGPSEVLVIADSGATPDFVASDLLSQAEHGPDSQVILLTPDADMAHQVAEAVERQLAELPRAETARQALNASRLIVTKDLAQCVEISNQYGPEHLIIQTRNARELVDGITSAGSVFLGDWSPESAGDYASGTNHVLPTYGYTATCSSLGLADFQKRMTVQELSKVGFSALASTIETLAAAERLTAHKNAVTLRVNALKEQA.

Positions 130, 188, and 211 each coordinate NAD(+). Substrate is bound by residues serine 237, glutamine 259, and histidine 262. Glutamine 259 and histidine 262 together coordinate Zn(2+). Catalysis depends on proton acceptor residues glutamate 326 and histidine 327. 4 residues coordinate substrate: histidine 327, aspartate 360, glutamate 414, and histidine 419. Residue aspartate 360 participates in Zn(2+) binding. Position 419 (histidine 419) interacts with Zn(2+).

It belongs to the histidinol dehydrogenase family. As to quaternary structure, homodimer. The cofactor is Zn(2+).

It carries out the reaction L-histidinol + 2 NAD(+) + H2O = L-histidine + 2 NADH + 3 H(+). Its pathway is amino-acid biosynthesis; L-histidine biosynthesis; L-histidine from 5-phospho-alpha-D-ribose 1-diphosphate: step 9/9. Its function is as follows. Catalyzes the sequential NAD-dependent oxidations of L-histidinol to L-histidinaldehyde and then to L-histidine. The chain is Histidinol dehydrogenase from Escherichia coli O157:H7.